We begin with the raw amino-acid sequence, 340 residues long: MTDHALLLVNLGSPASTQVADVRSYLNQFLMDPYVIDLPWPVRRLLVSLILIKRPEQSAHAYASIWWDEGSPLVVLSKRLQQAMKKEWSHGPVELAMRYGEPSIETVLTRLSEQGFKKVTLAPLYPQFADSTVTTVIEEAKRVVRAKSLKMQFSVLQPFYDQPEYLSALVESVRPHLEQPYDHLLLSFHGLPERHLHKLDPTGKHCLKDDCCMTAPAEVLATCYRAQCIQSAATFAKRMGIPDGKWSVSFQSRLGRAKWIEPYTEARLDELAAQGVKRLLVMCPAFVADCIETLEEIGDRGAEQFKEAGGEELVLVPCLNDDPNWAKELNRLCERAPLML.

Fe cation is bound by residues histidine 189 and glutamate 292.

Belongs to the ferrochelatase family.

It localises to the cytoplasm. The catalysed reaction is heme b + 2 H(+) = protoporphyrin IX + Fe(2+). It functions in the pathway porphyrin-containing compound metabolism; protoheme biosynthesis; protoheme from protoporphyrin-IX: step 1/1. Functionally, catalyzes the ferrous insertion into protoporphyrin IX. The chain is Ferrochelatase from Pseudomonas savastanoi pv. phaseolicola (strain 1448A / Race 6) (Pseudomonas syringae pv. phaseolicola (strain 1448A / Race 6)).